Reading from the N-terminus, the 209-residue chain is Segregation and condensation protein B (209 aa).

It belongs to the ScpB family. In terms of assembly, homodimer. Homodimerization may be required to stabilize the binding of ScpA to the Smc head domains. Component of a cohesin-like complex composed of ScpA, ScpB and the Smc homodimer, in which ScpA and ScpB bind to the head domain of Smc. The presence of the three proteins is required for the association of the complex with DNA.

It localises to the cytoplasm. Participates in chromosomal partition during cell division. May act via the formation of a condensin-like complex containing Smc and ScpA that pull DNA away from mid-cell into both cell halves. In Geobacillus thermodenitrificans (strain NG80-2), this protein is Segregation and condensation protein B.